The following is a 1367-amino-acid chain: Dynactin, 150 kDa isoform (1367 aa).

Residues 28 to 70 form the CAP-Gly domain; it reads GETAFAPGTWVGIELDEPSGKNDGSVQGERYFNCEMGYGMFVR. The tract at residues 76 to 318 is disordered; it reads VIAQPPPPPP…NLKATTITPR (243 aa). Low complexity-rich tracts occupy residues 88 to 99 and 132 to 149; these read TFRRSVTTRPTS and PSRTSSTSITRSPTRSPT. Positions 150–163 are enriched in polar residues; the sequence is KQLATASSSGNPSR. Composition is skewed to low complexity over residues 164–190 and 243–259; these read SGTPSTTTKPAGPTTRTRPSLSTSRHS and STGSVSSVGKSGFKRGS. 3 coiled-coil regions span residues 321–598, 637–698, and 1039–1199; these read ITNT…MQEE, LQSD…EAEQ, and AELK…RARL.

The protein belongs to the dynactin 150 kDa subunit family. Large macromolecular complex of at least 10 components; p150(glued) binds directly to microtubules and to cytoplasmic dynein.

The protein localises to the cytoplasm. Its subcellular location is the cytoskeleton. Required for the cytoplasmic dynein-driven retrograde movement of vesicles and organelles along microtubules. Dynein-dynactin interaction is a key component of the mechanism of axonal transport of vesicles and organelles. The sequence is that of Dynactin, 150 kDa isoform (ro-3) from Neurospora crassa (strain ATCC 24698 / 74-OR23-1A / CBS 708.71 / DSM 1257 / FGSC 987).